The chain runs to 59 residues: Large ribosomal subunit protein bL32c (59 aa).

The segment at 37–59 (SRSFSSGNEHPKPKGFSGQQANK) is disordered.

Belongs to the bacterial ribosomal protein bL32 family.

It is found in the plastid. It localises to the chloroplast. The polypeptide is Large ribosomal subunit protein bL32c (Saccharum hybrid (Sugarcane)).